A 213-amino-acid chain; its full sequence is Thymidylate kinase (213 aa).

10 to 17 (GLEGAGKT) provides a ligand contact to ATP.

This sequence belongs to the thymidylate kinase family.

The catalysed reaction is dTMP + ATP = dTDP + ADP. Functionally, phosphorylation of dTMP to form dTDP in both de novo and salvage pathways of dTTP synthesis. In Escherichia coli O157:H7 (strain EC4115 / EHEC), this protein is Thymidylate kinase.